We begin with the raw amino-acid sequence, 71 residues long: uncharacterized protein (71 aa).

The chain crosses the membrane as a helical span at residues 2–24 (IIAIVAVVIFLLNFLTPYGYMPM). A disordered region spans residues 48–71 (PAESSSNGGSMITKPSTGACQGGR). Polar residues predominate over residues 49–71 (AESSSNGGSMITKPSTGACQGGR).

The protein resides in the membrane. This is an uncharacterized protein from Archaeoglobus fulgidus (strain ATCC 49558 / DSM 4304 / JCM 9628 / NBRC 100126 / VC-16).